Here is a 1573-residue protein sequence, read N- to C-terminus: Synaptojanin-1 (1573 aa).

An SAC domain is found at 119–442 (VRKVLNSGNF…GDSISKIYAG (324 aa)). The tract at residues 500-899 (GSLRVSEQTL…GPPDGTVLVS (400 aa)) is catalytic. Residues Ser820 and Ser830 each carry the phosphoserine modification. Residues 902 to 971 (SSLPENNFFD…RTITIALKSP (70 aa)) enclose the RRM domain. Positions 1029–1054 (HLQPSSSSGLGTSPSSSPRTSPCQSP) are enriched in low complexity. Disordered regions lie at residues 1029–1322 (HLQP…PLKI), 1341–1360 (SVQT…QLPS), 1370–1463 (VSCM…GFKD), and 1535–1573 (SRRP…FTER). Ser1053 bears the Phosphoserine mark. The segment covering 1108 to 1130 (PPPPRPVAPPTRPAPPQRPPPPS) has biased composition (pro residues). Residues Ser1150 and Ser1178 each carry the phosphoserine modification. Arg1201 carries the post-translational modification Omega-N-methylarginine. Position 1220 is a phosphothreonine (Thr1220). Positions 1221–1234 (PESQSKTSETSKGS) are enriched in polar residues. Ser1292 bears the Phosphoserine mark. Residues 1293 to 1304 (SHSLPSEASSQP) show a composition bias toward low complexity. Residues 1313 to 1322 (DGKRESPLKI) are compositionally biased toward basic and acidic residues. 2 positions are modified to phosphoserine: Ser1318 and Ser1345. Position 1349 is a phosphothreonine (Thr1349). A compositionally biased stretch (polar residues) spans 1382 to 1407 (RSQSQENMRSSPNPFITGLTRTNPFS). 3 tandem repeats follow at residues 1396–1398 (FIT), 1406–1408 (FSD), and 1417–1419 (FRA). The tract at residues 1396–1419 (FITGLTRTNPFSDRTAAPGNPFRA) is 3 X 3 AA repeats of N-P-F. The segment covering 1536–1555 (RRPPPPPVPLLPPGTSPPVD) has biased composition (pro residues). Phosphoserine is present on residues Ser1551 and Ser1565.

This sequence belongs to the synaptojanin family. In the central section; belongs to the inositol 1,4,5-trisphosphate 5-phosphatase family. Interacts with ASH/GRB2. Interacts with PACSIN1, PACSIN2 and PACSIN3. Interacts with AMPH, SH3GL1, SH3GL2 and SH3GL3. Interacts with MYO1E (via SH3 domain). Interacts with BIN1 and DNM1. Interacts with EPS15.

The protein localises to the cytoplasm. It localises to the perinuclear region. The enzyme catalyses a 1,2-diacyl-sn-glycero-3-phospho-(1D-myo-inositol-4,5-bisphosphate) + H2O = a 1,2-diacyl-sn-glycero-3-phospho-(1D-myo-inositol 4-phosphate) + phosphate. In terms of biological role, phosphatase that acts on various phosphoinositides, including phosphatidylinositol 4-phosphate, phosphatidylinositol (4,5)-bisphosphate and phosphatidylinositol (3,4,5)-trisphosphate. Has a role in clathrin-mediated endocytosis. Hydrolyzes PIP2 bound to actin regulatory proteins resulting in the rearrangement of actin filaments downstream of tyrosine kinase and ASH/GRB2. This Homo sapiens (Human) protein is Synaptojanin-1 (SYNJ1).